Here is a 100-residue protein sequence, read N- to C-terminus: Urease subunit gamma (100 aa).

Belongs to the urease gamma subunit family. As to quaternary structure, heterotrimer of UreA (gamma), UreB (beta) and UreC (alpha) subunits. Three heterotrimers associate to form the active enzyme.

It localises to the cytoplasm. It carries out the reaction urea + 2 H2O + H(+) = hydrogencarbonate + 2 NH4(+). It participates in nitrogen metabolism; urea degradation; CO(2) and NH(3) from urea (urease route): step 1/1. This Marinobacter nauticus (strain ATCC 700491 / DSM 11845 / VT8) (Marinobacter aquaeolei) protein is Urease subunit gamma.